We begin with the raw amino-acid sequence, 282 residues long: Elongation factor Ts (282 aa).

Positions 80–83 are involved in Mg(2+) ion dislocation from EF-Tu; the sequence is TDFV.

This sequence belongs to the EF-Ts family.

It localises to the cytoplasm. Functionally, associates with the EF-Tu.GDP complex and induces the exchange of GDP to GTP. It remains bound to the aminoacyl-tRNA.EF-Tu.GTP complex up to the GTP hydrolysis stage on the ribosome. This is Elongation factor Ts from Chlamydia trachomatis serovar A (strain ATCC VR-571B / DSM 19440 / HAR-13).